A 474-amino-acid chain; its full sequence is MSNPLLSLNYEPAIQALGGDYYDEVLSAEFPQHILRFRNDQLLPKIGLNSQDVKDEHFIEAFGKFHCVRPFLALRYHGYQFGEYNPYLGDGRGFLYGQVRGVDDELYDFGTKGSGRTPYSRSADGRLTLKGGVREVLAAEILHRHGVRTSRCLSLIETGEGLWRGDEPSPTRSSVMVRFSRSHIRFGTFERLHFYKRPDLTKKLLNHVINCYYSNLKKENISQKDPFQDCYFLFYLELVKRIAKLVAQWMAAGFCHGVLNTDNMSITGESFDYGPYSFIPTYNPKFTAAYFDYSGLYRYSHQPLVCKSNLQLLQEALAAVIDRKNMRSALEKFDDFYLHEYRQLMMRRLGFKKLAEADADKLLQLTIKMLTDSQVGYHDFFLELRQKFSPEWRDDISQIFADFEQPELIDPWRQYYYHLLQTYSDNELEEMTERLQQYNPQQSLIRPVIESVWEAITLEDNWQPFYDLLQQIYD.

8 residues coordinate ATP: glycine 89, glycine 91, arginine 92, lysine 112, aspartate 124, glycine 125, arginine 178, and arginine 185. The Proton acceptor role is filled by aspartate 262. 2 residues coordinate Mg(2+): asparagine 263 and aspartate 272. An ATP-binding site is contributed by aspartate 272.

Belongs to the SELO family. The cofactor is Mg(2+). Mn(2+) serves as cofactor.

The catalysed reaction is L-seryl-[protein] + ATP = 3-O-(5'-adenylyl)-L-seryl-[protein] + diphosphate. It carries out the reaction L-threonyl-[protein] + ATP = 3-O-(5'-adenylyl)-L-threonyl-[protein] + diphosphate. It catalyses the reaction L-tyrosyl-[protein] + ATP = O-(5'-adenylyl)-L-tyrosyl-[protein] + diphosphate. The enzyme catalyses L-histidyl-[protein] + UTP = N(tele)-(5'-uridylyl)-L-histidyl-[protein] + diphosphate. The catalysed reaction is L-seryl-[protein] + UTP = O-(5'-uridylyl)-L-seryl-[protein] + diphosphate. It carries out the reaction L-tyrosyl-[protein] + UTP = O-(5'-uridylyl)-L-tyrosyl-[protein] + diphosphate. In terms of biological role, nucleotidyltransferase involved in the post-translational modification of proteins. It can catalyze the addition of adenosine monophosphate (AMP) or uridine monophosphate (UMP) to a protein, resulting in modifications known as AMPylation and UMPylation. The sequence is that of Protein nucleotidyltransferase YdiU from Trichodesmium erythraeum (strain IMS101).